Consider the following 404-residue polypeptide: Caspase-1 (404 aa).

Residues 1–91 (MADKVLKEKR…HLAGVLELST (91 aa)) enclose the CARD domain. Residues 1–119 (MADKVLKEKR…PFPAPQTVQD (119 aa)) constitute a propeptide that is removed on maturation. Residues 111-132 (FPAPQTVQDNPVKPASSEPRGS) form a disordered region. Active-site residues include His-237 and Cys-285. Positions 298–316 (SVGPSGNSSLLAAEDFEYD) are excised as a propeptide. Residue Ser-302 is modified to Phosphoserine.

The protein belongs to the peptidase C14A family. In terms of assembly, heterotetramer that consists of two anti-parallel arranged heterodimers, each one formed by a 20 kDa (Caspase-1 subunit p20) and a 10 kDa (Caspase-1 subunit p10) subunit. May be a component of the inflammasome, a protein complex which also includes PYCARD, CARD8 and NLRP2 and whose function would be the activation of pro-inflammatory caspases. Component of the AIM2 PANoptosome complex, a multiprotein complex that drives inflammatory cell death (PANoptosis). Both the p10 and p20 subunits interact with MEFV. Interacts with CARD17P/INCA and CARD18. Interacts with SERPINB1; this interaction regulates CASP1 activity. As to quaternary structure, heterotetramer that consists of two anti-parallel arranged heterodimers, each one formed by a 20 kDa (Caspase-1 subunit p20) and a 10 kDa (Caspase-1 subunit p10) subunit. In terms of processing, the two subunits are derived from the precursor sequence by an autocatalytic mechanism. Ubiquitinated via 'Lys-11'-linked polyubiquitination. Deubiquitinated by USP8.

Its subcellular location is the cytoplasm. It localises to the cell membrane. The enzyme catalyses Strict requirement for an Asp residue at position P1 and has a preferred cleavage sequence of Tyr-Val-Ala-Asp-|-.. Its function is as follows. Thiol protease involved in a variety of inflammatory processes by proteolytically cleaving other proteins, such as the precursors of the inflammatory cytokines interleukin-1 beta (IL1B) and interleukin 18 (IL18) as well as the pyroptosis inducer Gasdermin-D (GSDMD), into active mature peptides. Plays a key role in cell immunity as an inflammatory response initiator: once activated through formation of an inflammasome complex, it initiates a pro-inflammatory response through the cleavage of the two inflammatory cytokines IL1B and IL18, releasing the mature cytokines which are involved in a variety of inflammatory processes. Cleaves a tetrapeptide after an Asp residue at position P1. Also initiates pyroptosis, a programmed lytic cell death pathway, through cleavage of GSDMD. In contrast to cleavage of interleukin IL1B, recognition and cleavage of GSDMD is not strictly dependent on the consensus cleavage site but depends on an exosite interface on CASP1 that recognizes and binds the Gasdermin-D, C-terminal (GSDMD-CT) part. Cleaves and activates CASP7 in response to bacterial infection, promoting plasma membrane repair. Upon inflammasome activation, during DNA virus infection but not RNA virus challenge, controls antiviral immunity through the cleavage of CGAS, rendering it inactive. In apoptotic cells, cleaves SPHK2 which is released from cells and remains enzymatically active extracellularly. This Sus scrofa (Pig) protein is Caspase-1 (CASP1).